Reading from the N-terminus, the 291-residue chain is Hydroxysteroid 11-beta-dehydrogenase 1-like protein B (291 aa).

The signal sequence occupies residues 1 to 17 (MAGVILLLLSLCVGYIA). Residues 40–66 (GSSTGLGEQIAYEFARMGAHIMITARR), 91–92 (DM), and 118–120 (NHI) each bind NADP(+). S170 contacts substrate. Catalysis depends on Y183, which acts as the Proton acceptor. Residues 183 to 187 (YCASK) and 216 to 222 (GYIDTEN) contribute to the NADP(+) site.

Belongs to the short-chain dehydrogenases/reductases (SDR) family.

It is found in the secreted. The enzyme catalyses cortisone + NADPH + H(+) = cortisol + NADP(+). Unidirectional NADP(+)-dependent cortisol dehydrogenase (in vitro). The polypeptide is Hydroxysteroid 11-beta-dehydrogenase 1-like protein B (hsd11b1l-b) (Xenopus laevis (African clawed frog)).